A 199-amino-acid chain; its full sequence is Replication protein (199 aa).

It belongs to the Gram-positive plasmids replication protein type 2 family.

Its function is as follows. Is essential for plasmid replication. Nicks the positive strand at the plus origin of replication. This is Replication protein (repF) from Staphylococcus aureus.